Reading from the N-terminus, the 120-residue chain is Large ribosomal subunit protein uL14 (120 aa).

This sequence belongs to the universal ribosomal protein uL14 family. Part of the 50S ribosomal subunit. Forms a cluster with proteins L3 and L19. In the 70S ribosome, L14 and L19 interact and together make contacts with the 16S rRNA in bridges B5 and B8.

In terms of biological role, binds to 23S rRNA. Forms part of two intersubunit bridges in the 70S ribosome. The polypeptide is Large ribosomal subunit protein uL14 (Dictyoglomus turgidum (strain DSM 6724 / Z-1310)).